We begin with the raw amino-acid sequence, 451 residues long: Bifunctional protein GlmU (451 aa).

A pyrophosphorylase region spans residues 1-230 (MNNPIAAIVL…PADVGGINSR (230 aa)). UDP-N-acetyl-alpha-D-glucosamine is bound by residues 10-13 (LAAG), K24, Q74, 79-80 (GT), 102-104 (YGD), G142, E156, N171, and N228. D104 provides a ligand contact to Mg(2+). Residue N228 participates in Mg(2+) binding. The segment at 231–251 (AELAAAEAQWQAFRREEAMAA) is linker. Residues 252–451 (GASLRAPETV…RKKKAAEQKK (200 aa)) form an N-acetyltransferase region. 2 residues coordinate UDP-N-acetyl-alpha-D-glucosamine: R317 and K335. H347 functions as the Proton acceptor in the catalytic mechanism. The UDP-N-acetyl-alpha-D-glucosamine site is built by Y350 and N361. Residues A364, 370–371 (NY), S389, A407, and R424 contribute to the acetyl-CoA site.

In the N-terminal section; belongs to the N-acetylglucosamine-1-phosphate uridyltransferase family. The protein in the C-terminal section; belongs to the transferase hexapeptide repeat family. In terms of assembly, homotrimer. Mg(2+) is required as a cofactor.

The protein resides in the cytoplasm. The catalysed reaction is alpha-D-glucosamine 1-phosphate + acetyl-CoA = N-acetyl-alpha-D-glucosamine 1-phosphate + CoA + H(+). The enzyme catalyses N-acetyl-alpha-D-glucosamine 1-phosphate + UTP + H(+) = UDP-N-acetyl-alpha-D-glucosamine + diphosphate. It participates in nucleotide-sugar biosynthesis; UDP-N-acetyl-alpha-D-glucosamine biosynthesis; N-acetyl-alpha-D-glucosamine 1-phosphate from alpha-D-glucosamine 6-phosphate (route II): step 2/2. The protein operates within nucleotide-sugar biosynthesis; UDP-N-acetyl-alpha-D-glucosamine biosynthesis; UDP-N-acetyl-alpha-D-glucosamine from N-acetyl-alpha-D-glucosamine 1-phosphate: step 1/1. Its pathway is bacterial outer membrane biogenesis; LPS lipid A biosynthesis. Its function is as follows. Catalyzes the last two sequential reactions in the de novo biosynthetic pathway for UDP-N-acetylglucosamine (UDP-GlcNAc). The C-terminal domain catalyzes the transfer of acetyl group from acetyl coenzyme A to glucosamine-1-phosphate (GlcN-1-P) to produce N-acetylglucosamine-1-phosphate (GlcNAc-1-P), which is converted into UDP-GlcNAc by the transfer of uridine 5-monophosphate (from uridine 5-triphosphate), a reaction catalyzed by the N-terminal domain. The polypeptide is Bifunctional protein GlmU (Sphingopyxis alaskensis (strain DSM 13593 / LMG 18877 / RB2256) (Sphingomonas alaskensis)).